The sequence spans 686 residues: Eomesodermin homolog (686 aa).

Residues 27–46 (GGSGGSAGHLPSAAPSPQKL) form a disordered region. A compositionally biased stretch (low complexity) spans 34–43 (GHLPSAAPSP). Residue serine 107 is modified to Phosphoserine. A DNA-binding region (T-box) is located at residues 276–456 (LWLKFHRHQT…HNPFAKGFRD (181 aa)). Positions 571 to 686 (AMAGWGGRGS…GGYYAFYTTP (116 aa)) are required for transcription activation. Positions 639 to 686 (ACKRRRLSPSNSSNENSPSIKCEDINAEEYSKDTSKGMGGYYAFYTTP) are disordered. Over residues 646–657 (SPSNSSNENSPS) the composition is skewed to low complexity. Basic and acidic residues predominate over residues 659–673 (KCEDINAEEYSKDTS).

In terms of tissue distribution, expressed in CD8+ T-cells.

The protein resides in the nucleus. Its function is as follows. Functions as a transcriptional activator playing a crucial role during development. Functions in trophoblast differentiation and later in gastrulation, regulating both mesoderm delamination and endoderm specification. Plays a role in brain development being required for the specification and the proliferation of the intermediate progenitor cells and their progeny in the cerebral cortex. Required for differentiation and migration of unipolar dendritic brush cells. Also involved in the differentiation of CD8+ T-cells during immune response regulating the expression of lytic effector genes. This is Eomesodermin homolog (EOMES) from Homo sapiens (Human).